A 258-amino-acid chain; its full sequence is Ubiquinone/menaquinone biosynthesis C-methyltransferase UbiE (258 aa).

S-adenosyl-L-methionine contacts are provided by residues T81, D102, and 130-131; that span reads NA.

It belongs to the class I-like SAM-binding methyltransferase superfamily. MenG/UbiE family.

It catalyses the reaction a 2-demethylmenaquinol + S-adenosyl-L-methionine = a menaquinol + S-adenosyl-L-homocysteine + H(+). It carries out the reaction a 2-methoxy-6-(all-trans-polyprenyl)benzene-1,4-diol + S-adenosyl-L-methionine = a 5-methoxy-2-methyl-3-(all-trans-polyprenyl)benzene-1,4-diol + S-adenosyl-L-homocysteine + H(+). It participates in quinol/quinone metabolism; menaquinone biosynthesis; menaquinol from 1,4-dihydroxy-2-naphthoate: step 2/2. The protein operates within cofactor biosynthesis; ubiquinone biosynthesis. Its function is as follows. Methyltransferase required for the conversion of demethylmenaquinol (DMKH2) to menaquinol (MKH2) and the conversion of 2-polyprenyl-6-methoxy-1,4-benzoquinol (DDMQH2) to 2-polyprenyl-3-methyl-6-methoxy-1,4-benzoquinol (DMQH2). The sequence is that of Ubiquinone/menaquinone biosynthesis C-methyltransferase UbiE from Rhizobium meliloti (strain 1021) (Ensifer meliloti).